The chain runs to 283 residues: Diaminopimelate epimerase (283 aa).

Residues asparagine 13, glutamine 45, and asparagine 65 each coordinate substrate. The active-site Proton donor is cysteine 74. Substrate-binding positions include 75-76 (GN), asparagine 156, asparagine 190, and 208-209 (ER). The Proton acceptor role is filled by cysteine 217. 218–219 (GS) contacts substrate.

This sequence belongs to the diaminopimelate epimerase family. Homodimer.

Its subcellular location is the cytoplasm. The enzyme catalyses (2S,6S)-2,6-diaminopimelate = meso-2,6-diaminopimelate. It functions in the pathway amino-acid biosynthesis; L-lysine biosynthesis via DAP pathway; DL-2,6-diaminopimelate from LL-2,6-diaminopimelate: step 1/1. Functionally, catalyzes the stereoinversion of LL-2,6-diaminopimelate (L,L-DAP) to meso-diaminopimelate (meso-DAP), a precursor of L-lysine and an essential component of the bacterial peptidoglycan. In Bartonella quintana (strain Toulouse) (Rochalimaea quintana), this protein is Diaminopimelate epimerase.